Consider the following 216-residue polypeptide: MLSDMSLIATLSFFTLLPFLVAAGTCYIKFSIVFVMVRNALGLQQVPSNMTLNGIALIMALFVMKPIIEAGYENYLNGPQKFDTISDIVRFSDSGLMEYKQYLKKHTDLELARFFQRSEEENADLKSAENNDYSLFSLLPAYALSEIKDAFKIGFYLYLPFVVVDLVISSILLALGMMMMSPITISVPIKLVLFVALDGWGILSKALIEQYINIPA.

The next 4 membrane-spanning stretches (helical) occupy residues 8–28, 52–72, 153–173, and 183–203; these read IATL…TCYI, LNGI…EAGY, IGFY…SILL, and ITIS…WGIL.

It belongs to the FliP/MopC/SpaP family.

The protein localises to the cell membrane. In terms of biological role, required for surface presentation of invasion plasmid antigens. Could play a role in preserving the translocation competence of the ipa antigens. Required for invasion and for secretion of the three Ipa proteins. The protein is Surface presentation of antigens protein SpaP (spaP) of Shigella flexneri.